The chain runs to 1828 residues: Proteasome activator complex subunit 4 (1828 aa).

HEAT repeat units lie at residues 462–506, 985–1024, 1164–1202, 1339–1377, 1621–1659, and 1665–1703; these read PEGP…LVDC, NFCCRDLIPLVLEFLRPERQDVTQQQFKGALYCLLGNHGG, YVLPVRAIRYLVQCLNHDALIVRKMAISTVAGILKQLKR, DAFLPIIKPHLERLVADSHESTQRCAAEIVAGLIRGSKH, PVQVPLVLDVLRQTARSSSWHARYTVLTYIQTMVFYNLF, and EESVQGVRWLILQLMEDEQLEVREMAATTLSGLLQCNFL. The segment at 1635-1723 is bromodomain-like (BRDL); it reads ARSSSWHARY…EALCKTRLPK (89 aa).

Belongs to the BLM10 family. As to quaternary structure, homodimer. Interacts with the 20S and 26S proteasomes.

The protein resides in the cytoplasm. The protein localises to the cytosol. It localises to the nucleus. It is found in the nucleus speckle. In terms of biological role, associated component of the proteasome that specifically recognizes acetylated histones and promotes ATP- and ubiquitin-independent degradation of core histones during DNA damage response. Recognizes and binds acetylated histones via its bromodomain-like (BRDL) region and activates the proteasome by opening the gated channel for substrate entry. Binds to the core proteasome via its C-terminus, which occupies the same binding sites as the proteasomal ATPases, opening the closed structure of the proteasome via an active gating mechanism. involved in DNA damage response in somatic cells: binds to acetylated histones and promotes degradation of histones. This chain is Proteasome activator complex subunit 4 (psme4), found in Xenopus laevis (African clawed frog).